We begin with the raw amino-acid sequence, 300 residues long: Probable amino-acid ABC transporter periplasmic-binding protein y4tE (300 aa).

A signal peptide spans M1 to A27.

Belongs to the bacterial solute-binding protein 3 family.

It localises to the periplasm. Probably part of the binding-protein-dependent transport system y4tEFGH for an amino acid. This is Probable amino-acid ABC transporter periplasmic-binding protein y4tE from Sinorhizobium fredii (strain NBRC 101917 / NGR234).